The sequence spans 471 residues: 3-isopropylmalate dehydratase large subunit (471 aa).

3 residues coordinate [4Fe-4S] cluster: cysteine 347, cysteine 407, and cysteine 410.

This sequence belongs to the aconitase/IPM isomerase family. LeuC type 1 subfamily. As to quaternary structure, heterodimer of LeuC and LeuD. [4Fe-4S] cluster is required as a cofactor.

It carries out the reaction (2R,3S)-3-isopropylmalate = (2S)-2-isopropylmalate. It participates in amino-acid biosynthesis; L-leucine biosynthesis; L-leucine from 3-methyl-2-oxobutanoate: step 2/4. In terms of biological role, catalyzes the isomerization between 2-isopropylmalate and 3-isopropylmalate, via the formation of 2-isopropylmaleate. The sequence is that of 3-isopropylmalate dehydratase large subunit from Acaryochloris marina (strain MBIC 11017).